A 75-amino-acid chain; its full sequence is Cytochrome c oxidase subunit 6C (75 aa).

The Mitochondrial matrix segment spans residues Met1–Gly13. Residues Leu14–Lys54 form a helical membrane-spanning segment. The Mitochondrial intermembrane segment spans residues Asn55–Lys75.

It belongs to the cytochrome c oxidase subunit 6c family. As to quaternary structure, component of the cytochrome c oxidase (complex IV, CIV), a multisubunit enzyme composed of 14 subunits. The complex is composed of a catalytic core of 3 subunits MT-CO1, MT-CO2 and MT-CO3, encoded in the mitochondrial DNA, and 11 supernumerary subunits COX4I, COX5A, COX5B, COX6A, COX6B, COX6C, COX7A, COX7B, COX7C, COX8 and NDUFA4, which are encoded in the nuclear genome. The complex exists as a monomer or a dimer and forms supercomplexes (SCs) in the inner mitochondrial membrane with NADH-ubiquinone oxidoreductase (complex I, CI) and ubiquinol-cytochrome c oxidoreductase (cytochrome b-c1 complex, complex III, CIII), resulting in different assemblies (supercomplex SCI(1)III(2)IV(1) and megacomplex MCI(2)III(2)IV(2)).

The protein localises to the mitochondrion inner membrane. It functions in the pathway energy metabolism; oxidative phosphorylation. Its function is as follows. Component of the cytochrome c oxidase, the last enzyme in the mitochondrial electron transport chain which drives oxidative phosphorylation. The respiratory chain contains 3 multisubunit complexes succinate dehydrogenase (complex II, CII), ubiquinol-cytochrome c oxidoreductase (cytochrome b-c1 complex, complex III, CIII) and cytochrome c oxidase (complex IV, CIV), that cooperate to transfer electrons derived from NADH and succinate to molecular oxygen, creating an electrochemical gradient over the inner membrane that drives transmembrane transport and the ATP synthase. Cytochrome c oxidase is the component of the respiratory chain that catalyzes the reduction of oxygen to water. Electrons originating from reduced cytochrome c in the intermembrane space (IMS) are transferred via the dinuclear copper A center (CU(A)) of subunit 2 and heme A of subunit 1 to the active site in subunit 1, a binuclear center (BNC) formed by heme A3 and copper B (CU(B)). The BNC reduces molecular oxygen to 2 water molecules using 4 electrons from cytochrome c in the IMS and 4 protons from the mitochondrial matrix. The polypeptide is Cytochrome c oxidase subunit 6C (COX6C) (Plecturocebus donacophilus (Bolivian gray titi monkey)).